The following is a 337-amino-acid chain: tRNA N6-adenosine threonylcarbamoyltransferase (337 aa).

Fe cation-binding residues include histidine 110 and histidine 114. Substrate is bound by residues 133–137 (LVSGK), aspartate 166, glycine 179, and asparagine 271. Aspartate 300 is a Fe cation binding site.

Belongs to the KAE1 / TsaD family. Fe(2+) serves as cofactor.

Its subcellular location is the cytoplasm. The enzyme catalyses L-threonylcarbamoyladenylate + adenosine(37) in tRNA = N(6)-L-threonylcarbamoyladenosine(37) in tRNA + AMP + H(+). Required for the formation of a threonylcarbamoyl group on adenosine at position 37 (t(6)A37) in tRNAs that read codons beginning with adenine. Is involved in the transfer of the threonylcarbamoyl moiety of threonylcarbamoyl-AMP (TC-AMP) to the N6 group of A37, together with TsaE and TsaB. TsaD likely plays a direct catalytic role in this reaction. This chain is tRNA N6-adenosine threonylcarbamoyltransferase, found in Buchnera aphidicola subsp. Schizaphis graminum (strain Sg).